A 575-amino-acid polypeptide reads, in one-letter code: Mitochondrial 2-methylisocitrate lyase ICL2 (575 aa).

The active site involves Cys-238.

The protein belongs to the isocitrate lyase/PEP mutase superfamily. Isocitrate lyase family.

The protein resides in the mitochondrion matrix. It carries out the reaction (2S,3R)-3-hydroxybutane-1,2,3-tricarboxylate = pyruvate + succinate. Its pathway is organic acid metabolism; propanoate degradation. Functionally, catalyzes the formation of pyruvate and succinate from 2-methylisocitrate during the metabolism of endogenous propionyl-CoA. Does not act on isocitrate. The protein is Mitochondrial 2-methylisocitrate lyase ICL2 (ICL2) of Saccharomyces cerevisiae (strain ATCC 204508 / S288c) (Baker's yeast).